Consider the following 206-residue polypeptide: Small ribosomal subunit protein uS4 (206 aa).

Residues 28–48 (YMERRPYGPGEHGRARKKQDS) form a disordered region. The 66-residue stretch at 95 to 160 (MRLDALVLRA…MPPFQVAAAG (66 aa)) folds into the S4 RNA-binding domain.

The protein belongs to the universal ribosomal protein uS4 family. Part of the 30S ribosomal subunit. Contacts protein S5. The interaction surface between S4 and S5 is involved in control of translational fidelity.

In terms of biological role, one of the primary rRNA binding proteins, it binds directly to 16S rRNA where it nucleates assembly of the body of the 30S subunit. With S5 and S12 plays an important role in translational accuracy. The sequence is that of Small ribosomal subunit protein uS4 from Paenarthrobacter aurescens (strain TC1).